The following is a 1006-amino-acid chain: DNA ligase 4 (1006 aa).

The tract at residues 1–36 is disordered; that stretch reads MDSDDDYNGPADTNPRLEDEESDLDEKYPNRPRNHS. Residues Glu-318, Lys-320, Leu-321, Arg-325, Glu-387, Phe-427, Glu-487, Lys-492, Lys-509, and Lys-511 each contribute to the ATP site. Residue Lys-320 is the N6-AMP-lysine intermediate of the active site. Glu-387 serves as a coordination point for Mg(2+). Position 487 (Glu-487) interacts with Mg(2+). 2 consecutive BRCT domains span residues 718–811 and 890–1002; these read PSGN…PDSL and PSGW…GFQP.

Belongs to the ATP-dependent DNA ligase family. It depends on Mg(2+) as a cofactor.

Its subcellular location is the nucleus. The enzyme catalyses ATP + (deoxyribonucleotide)n-3'-hydroxyl + 5'-phospho-(deoxyribonucleotide)m = (deoxyribonucleotide)n+m + AMP + diphosphate.. Its function is as follows. DNA ligase involved in DNA non-homologous end joining (NHEJ); required for double-strand break (DSB) repair. In Aspergillus oryzae (strain ATCC 42149 / RIB 40) (Yellow koji mold), this protein is DNA ligase 4 (lig4).